Here is a 114-residue protein sequence, read N- to C-terminus: UPF0342 protein NWMN_1737 (114 aa).

The protein belongs to the UPF0342 family.

The polypeptide is UPF0342 protein NWMN_1737 (Staphylococcus aureus (strain Newman)).